Here is a 263-residue protein sequence, read N- to C-terminus: Purine nucleoside phosphorylase SAV1187 (263 aa).

3 residues coordinate Zn(2+): His-79, Cys-124, and His-141.

It belongs to the purine nucleoside phosphorylase YfiH/LACC1 family. In terms of assembly, homodimer. The cofactor is Cu(2+). It depends on Zn(2+) as a cofactor.

The catalysed reaction is adenosine + phosphate = alpha-D-ribose 1-phosphate + adenine. It carries out the reaction S-methyl-5'-thioadenosine + phosphate = 5-(methylsulfanyl)-alpha-D-ribose 1-phosphate + adenine. The enzyme catalyses inosine + phosphate = alpha-D-ribose 1-phosphate + hypoxanthine. It catalyses the reaction adenosine + H2O + H(+) = inosine + NH4(+). In terms of biological role, purine nucleoside enzyme that catalyzes the phosphorolysis of adenosine and inosine nucleosides, yielding D-ribose 1-phosphate and the respective free bases, adenine and hypoxanthine. Also catalyzes the phosphorolysis of S-methyl-5'-thioadenosine into adenine and S-methyl-5-thio-alpha-D-ribose 1-phosphate. Also has adenosine deaminase activity. This chain is Purine nucleoside phosphorylase SAV1187, found in Staphylococcus aureus (strain Mu50 / ATCC 700699).